Reading from the N-terminus, the 427-residue chain is Piwi protein (427 aa).

The interval 38–167 (PYEVPSLKYN…VQFVSKLGGK (130 aa)) is mid domain. Positions 110–406 (GIMLVLPEYN…VAGIIANVNR (297 aa)) constitute a Piwi domain. Residues 118–124 (YNTPLYY) are binds 5'-phosphorylated end of guide DNA. The tract at residues 147 to 148 (RN) is binds target DNA. A binds guide DNA region spans residues 150–155 (TFYVDN). A divalent metal cation is bound by residues Gln-159 and Leu-427. The tract at residues 168–427 (PWILNVDPEK…RSLQTNPWFL (260 aa)) is PIWI domain.

This sequence belongs to the argonaute family. Short pAgo subfamily. Homodimer probably stabilized by DNA. Each subunit is capable of interacting with a DNA molecule. It depends on a divalent metal cation as a cofactor.

Functionally, might play a role in defense against invading genetic elements, using short nucleic acid sequences as guides to bind complementary target strands, resulting in slicing of the target nucleic acid. Binds nucleic acids with decreasing affinity in the following order; ssDNA, ssRNA, dsDNA, RNA-DNA, RNA-RNA. Association of the 5' seed region of the guide strand (nucleotides 2-7) with AfPiwi increases affinity for the corresponding target strand; the greatest increase in affinity is for guide DNA with target RNA. This Archaeoglobus fulgidus (strain ATCC 49558 / DSM 4304 / JCM 9628 / NBRC 100126 / VC-16) protein is Piwi protein.